Consider the following 286-residue polypeptide: Bifunctional protein FolD (286 aa).

NADP(+) contacts are provided by residues 166 to 168 (GAS) and Ile-232.

The protein belongs to the tetrahydrofolate dehydrogenase/cyclohydrolase family. Homodimer.

The enzyme catalyses (6R)-5,10-methylene-5,6,7,8-tetrahydrofolate + NADP(+) = (6R)-5,10-methenyltetrahydrofolate + NADPH. It catalyses the reaction (6R)-5,10-methenyltetrahydrofolate + H2O = (6R)-10-formyltetrahydrofolate + H(+). The protein operates within one-carbon metabolism; tetrahydrofolate interconversion. In terms of biological role, catalyzes the oxidation of 5,10-methylenetetrahydrofolate to 5,10-methenyltetrahydrofolate and then the hydrolysis of 5,10-methenyltetrahydrofolate to 10-formyltetrahydrofolate. The sequence is that of Bifunctional protein FolD from Marinobacter nauticus (strain ATCC 700491 / DSM 11845 / VT8) (Marinobacter aquaeolei).